Reading from the N-terminus, the 388-residue chain is FMRFamide neuropeptides (388 aa).

The N-terminal stretch at 1 to 21 (MVAPLLVFLFSLQLCHTTSWA) is a signal peptide. Residues 22 to 172 (YVGGNSLNSN…SNHQVIRDSR (151 aa)) constitute a propeptide that is removed on maturation. The segment at 40–74 (FPAGTSNEVPEDAANGQDDNDDSQLTEPNDNNAPL) is disordered. A compositionally biased stretch (polar residues) spans 64–74 (LTEPNDNNAPL). Residues F179, F196, F208, F219, F230, F241, F253, F265, F277, F289, F301, F313, F325, F337, F346, F359, and F372 each carry the phenylalanine amide modification. The tract at residues 360-388 (GRTPTQSSDFMRFGKSLDKSENKTSDLQK) is disordered. Basic and acidic residues predominate over residues 374-388 (KSLDKSENKTSDLQK). Residues 375-388 (SLDKSENKTSDLQK) constitute a propeptide that is removed on maturation.

The protein belongs to the FARP (FMRFamide related peptide) family. As to expression, in the brain, expressed in 2 large cells in the lateral neurons in each optic lobe, 2 slightly bigger cells on both sides of the tritocerebrum, around 14 small cells in the dorsal area, around 13 cells in the subesophageal ganglion, and in the central brain.

The protein resides in the secreted. In Musca domestica (House fly), this protein is FMRFamide neuropeptides.